Consider the following 204-residue polypeptide: ATP phosphoribosyltransferase (204 aa).

It belongs to the ATP phosphoribosyltransferase family. Short subfamily. As to quaternary structure, heteromultimer composed of HisG and HisZ subunits.

Its subcellular location is the cytoplasm. It carries out the reaction 1-(5-phospho-beta-D-ribosyl)-ATP + diphosphate = 5-phospho-alpha-D-ribose 1-diphosphate + ATP. It participates in amino-acid biosynthesis; L-histidine biosynthesis; L-histidine from 5-phospho-alpha-D-ribose 1-diphosphate: step 1/9. Functionally, catalyzes the condensation of ATP and 5-phosphoribose 1-diphosphate to form N'-(5'-phosphoribosyl)-ATP (PR-ATP). Has a crucial role in the pathway because the rate of histidine biosynthesis seems to be controlled primarily by regulation of HisG enzymatic activity. The polypeptide is ATP phosphoribosyltransferase (Staphylococcus aureus (strain USA300)).